The chain runs to 289 residues: ATP synthase subunit a (289 aa).

The next 7 helical transmembrane spans lie at 41 to 61 (KATA…WLGF), 101 to 121 (YLLV…IPAA), 129 to 149 (IAVP…AGIK), 166 to 186 (TAPL…TLIV), 189 to 209 (FTLA…LLVF), 222 to 242 (FVFG…ELVI), and 244 to 264 (ALQA…AMAH).

Belongs to the ATPase A chain family. F-type ATPases have 2 components, CF(1) - the catalytic core - and CF(0) - the membrane proton channel. CF(1) has five subunits: alpha(3), beta(3), gamma(1), delta(1), epsilon(1). CF(0) has three main subunits: a(1), b(2) and c(9-12). The alpha and beta chains form an alternating ring which encloses part of the gamma chain. CF(1) is attached to CF(0) by a central stalk formed by the gamma and epsilon chains, while a peripheral stalk is formed by the delta and b chains.

Its subcellular location is the cell membrane. Its function is as follows. Key component of the proton channel; it plays a direct role in the translocation of protons across the membrane. The sequence is that of ATP synthase subunit a from Frankia alni (strain DSM 45986 / CECT 9034 / ACN14a).